The chain runs to 569 residues: Putative diguanylate cyclase DgcQ (569 aa).

The next 2 membrane-spanning stretches (helical) occupy residues 25–45 and 365–385; these read LGPGHVVNLCFIVVLLFSTLL and IALTLLWALFTTMLLLSWYVI. The 136-residue stretch at 433–568 folds into the GGDEF domain; sequence HPFSVIQVDL…GRNRVFASDN (136 aa). Position 441 (aspartate 441) interacts with Mg(2+). Substrate is bound by residues asparagine 449, histidine 454, and aspartate 458. Glutamate 484 lines the Mg(2+) pocket. Glutamate 484 functions as the Proton acceptor in the catalytic mechanism.

In terms of assembly, homodimer. Requires Mg(2+) as cofactor.

The protein resides in the cell inner membrane. The enzyme catalyses 2 GTP = 3',3'-c-di-GMP + 2 diphosphate. It participates in glycan metabolism; bacterial cellulose biosynthesis. Its pathway is purine metabolism; 3',5'-cyclic di-GMP biosynthesis. Catalyzes the synthesis of cyclic-di-GMP (c-di-GMP) via the condensation of 2 GTP molecules. Cyclic-di-GMP is a second messenger which controls cell surface-associated traits in bacteria. Involved in the regulation of cellulose production. The sequence is that of Putative diguanylate cyclase DgcQ from Shigella flexneri.